The primary structure comprises 71 residues: Dermaseptin-PT9 (71 aa).

A signal peptide spans 1 to 22; that stretch reads MAFLKKSLFLVLFLGLVSLSIC. Positions 23–43 are excised as a propeptide; the sequence is EEEKRENEMEQEDDEQSEMKR. V68 is subject to Valine amide. A propeptide spanning residues 69–71 is cleaved from the precursor; it reads GEQ.

The protein belongs to the frog skin active peptide (FSAP) family. Dermaseptin subfamily. As to expression, expressed by the skin glands.

The protein localises to the secreted. The protein resides in the target cell membrane. Functionally, antimicrobial peptide with activity against fungi, Gram-positive and Gram-negative bacteria. Is active against S.aureus (MIC=16 uM), MRSA (MIC=32 uM), E.faecalis (MIC=16 uM), E.coli (MIC=8 uM), P.aeruginosa (MIC=16 uM), K.pneumoniae (MIC=8 uM), and C.albicans (MIC=64 uM). Also inhibits biofilm formation. Acts by disrupting cell membranes. Also exhibits anti-proliferative effect against various human cancer cells. Shows weak hemolytic activity towards horse erythrocytes. The chain is Dermaseptin-PT9 from Phyllomedusa tarsius (Brownbelly leaf frog).